Consider the following 175-residue polypeptide: Peptide deformylase (175 aa).

Residues C92 and H134 each contribute to the Fe cation site. E135 is an active-site residue. Position 138 (H138) interacts with Fe cation.

Belongs to the polypeptide deformylase family. Requires Fe(2+) as cofactor.

It carries out the reaction N-terminal N-formyl-L-methionyl-[peptide] + H2O = N-terminal L-methionyl-[peptide] + formate. In terms of biological role, removes the formyl group from the N-terminal Met of newly synthesized proteins. Requires at least a dipeptide for an efficient rate of reaction. N-terminal L-methionine is a prerequisite for activity but the enzyme has broad specificity at other positions. In Blochmanniella floridana, this protein is Peptide deformylase.